Consider the following 475-residue polypeptide: Tubulin epsilon chain (475 aa).

148 to 154 (GGGTGSG) lines the GTP pocket.

The protein belongs to the tubulin family. In terms of assembly, found in a complex with TEDC1, TEDC2, TUBE1 and TUBD1.

It localises to the cytoplasm. The protein localises to the cytoskeleton. Its subcellular location is the microtubule organizing center. It is found in the centrosome. The chain is Tubulin epsilon chain (Tube1) from Mus musculus (Mouse).